The chain runs to 138 residues: Superoxide dismutase [Mn] (138 aa).

Positions 1, 49, 133, and 137 each coordinate Mn(2+).

It belongs to the iron/manganese superoxide dismutase family. Requires Mn(2+) as cofactor.

The catalysed reaction is 2 superoxide + 2 H(+) = H2O2 + O2. Its function is as follows. Destroys superoxide anion radicals which are normally produced within the cells and which are toxic to biological systems. This is Superoxide dismutase [Mn] (sodA) from Mycobacteroides chelonae (Mycobacterium chelonae).